The primary structure comprises 272 residues: MDFAGHLHLRAAPRAFGHTALTLQSFRAPFHLSKPYWDYDSRVLLVQVVNPTAGILAGDRIESEITVDAGAALLITTPSASRVFRMDAGVATCRQHFTVAAGAWLEVMPGPLVPHRGSDYRQSTIVELTRGAGGFFVDQLMPGRAAHGEAWAWRRLCLEFECRLDGRLLVRERVDQSGEELRALAELAGSGAAACFANAILIPGAEADEDWRAAVEGLHRDGAWVGVSALREAGWSIKVIAPDGAYLRETLRAIRAVLAEAFPRMRCDPRRL.

Belongs to the UreD family. UreD, UreF and UreG form a complex that acts as a GTP-hydrolysis-dependent molecular chaperone, activating the urease apoprotein by helping to assemble the nickel containing metallocenter of UreC. The UreE protein probably delivers the nickel.

The protein resides in the cytoplasm. Its function is as follows. Required for maturation of urease via the functional incorporation of the urease nickel metallocenter. The sequence is that of Urease accessory protein UreD from Opitutus terrae (strain DSM 11246 / JCM 15787 / PB90-1).